The following is a 160-amino-acid chain: Peripheral myelin protein 22 (160 aa).

Met1 is a topological domain (cytoplasmic). Residues 2 to 31 traverse the membrane as a helical segment; the sequence is LLLLLGILFLHIAVLVLLFVSTIVSQWLVG. Over 32–64 the chain is Extracellular; it reads NGHRTDLWQNCTTSALGAVQHCYSSSVSEWLQS. Residue Asn41 is glycosylated (N-linked (GlcNAc...) asparagine). A helical membrane pass occupies residues 65 to 91; the sequence is VQATMILSVIFSVLSLFLFFCQLFTLT. Residues 92 to 95 lie on the Cytoplasmic side of the membrane; it reads KGGR. Residues 96–119 form a helical membrane-spanning segment; sequence FYITGVFQILAGLCVMSAAAIYTV. Over 120–133 the chain is Extracellular; the sequence is RHSEWHVNNDYSYG. A helical membrane pass occupies residues 134–156; sequence FAYILAWVAFPLALLSGIIYVIL. Residues 157-160 lie on the Cytoplasmic side of the membrane; sequence RKRE.

It belongs to the PMP-22/EMP/MP20 family. In terms of processing, ubiquitinated by the DCX(DCAF13) E3 ubiquitin ligase complex, leading to its degradation. In terms of tissue distribution, found exclusively in the peripheral nervous system. Present in both myelinating and nonmyelinating Schwann cells. Found in the tumors of Schwann cell lineage where axons are present (neurofibromas) but not where axons are absent (schwannomas).

It is found in the cell membrane. In terms of biological role, might be involved in growth regulation, and in myelinization in the peripheral nervous system. The polypeptide is Peripheral myelin protein 22 (Pmp22) (Rattus norvegicus (Rat)).